The sequence spans 450 residues: MNITILSKETIKPLAPTPHHHKYYKVSLLDQFAPSSYMPFIFFYPNKFADRDAAGILTQLKESLSQILTIYYPLAGRVKDTVYVECNDEGVEFIEAQANGSLSDFLKQPDIAALNNFLPRNGNGLEKGCSISPVAIKATVFECSGIVLGVCIFHKVVDAAAAGEFLQSWAKIGRGSKETVELPNFTSASSLFPPRESLSSKFVRDFDNFFFQGSKSFMRRFVFDATAITTLRTKATSEKVPNPSRVEALMEFVVQHLSTAFKTAKSETPETLMITHPVNLRKRIEPPLPDSTFGNVIWLAFAFYDCDPSETKIKPGDVVERVREAFAALDKESISELETDDAFTSLSELLESVYTNEKIKIYRFTSTCNMGFYDVDFGWGKPVWVAHMGNMVDYRCKQQIVFMETGHMSKDIELWLAAEEDELSVLEKNAEFLAYATPNPTIWLDSDGTN.

The active-site Proton acceptor is His154. The Nuclear localization signal motif lies at 218 to 225; sequence MRRFVFDA. The active-site Proton acceptor is the Asp376.

Belongs to the plant acyltransferase family. As to quaternary structure, monomer.

The protein localises to the cytoplasm. Its subcellular location is the nucleus. The catalysed reaction is rhazimol + acetyl-CoA = akuammiline + CoA + H(+). The protein operates within alkaloid biosynthesis. Acyltransferase involved in the biosynthesis of akuammilan monoterpene indole alkaloids (MIAs) natural products, components with various biological properties such as antidiabetic, antibacterial, anti-inflammatory, anticancer, and antimalarial activities. Catalyzes the conversion of rhazimol to akuammiline. This Alstonia scholaris (Dogbane) protein is Akuammiline synthase 2.